We begin with the raw amino-acid sequence, 269 residues long: Ribosomal RNA small subunit methyltransferase A (269 aa).

S-adenosyl-L-methionine contacts are provided by histidine 11, leucine 13, glycine 38, glutamate 59, aspartate 84, and asparagine 105.

It belongs to the class I-like SAM-binding methyltransferase superfamily. rRNA adenine N(6)-methyltransferase family. RsmA subfamily.

The protein localises to the cytoplasm. It catalyses the reaction adenosine(1518)/adenosine(1519) in 16S rRNA + 4 S-adenosyl-L-methionine = N(6)-dimethyladenosine(1518)/N(6)-dimethyladenosine(1519) in 16S rRNA + 4 S-adenosyl-L-homocysteine + 4 H(+). Functionally, specifically dimethylates two adjacent adenosines (A1518 and A1519) in the loop of a conserved hairpin near the 3'-end of 16S rRNA in the 30S particle. May play a critical role in biogenesis of 30S subunits. The chain is Ribosomal RNA small subunit methyltransferase A from Acaryochloris marina (strain MBIC 11017).